The sequence spans 646 residues: Cysteine-rich receptor-like protein kinase 37 (646 aa).

Residues 1–26 (MGKSCVVTSSFSLLLLFLQTLKYVHA) form the signal peptide. Gnk2-homologous domains follow at residues 27–132 (GFIC…NHST) and 142–252 (TINP…LYPY). Residues 27–287 (GFICYGDFFN…RDEKSFQGSN (261 aa)) are Extracellular-facing. N-linked (GlcNAc...) asparagine glycosylation is found at asparagine 62, asparagine 129, asparagine 169, and asparagine 180. The chain crosses the membrane as a helical span at residues 288-308 (IAIIVVPSVINLIIFVVLIFS). Residues 309–646 (WKRKQSHTII…LTRPSLSLGH (338 aa)) lie on the Cytoplasmic side of the membrane. The 282-residue stretch at 345 to 626 (FSLENKLGQG…LFWLERHATI (282 aa)) folds into the Protein kinase domain. ATP is bound by residues 351–359 (LGQGGFGSV) and lysine 373. Tyrosine 418 is modified (phosphotyrosine). Aspartate 470 (proton acceptor) is an active-site residue. At serine 474 the chain carries Phosphoserine. At threonine 510 the chain carries Phosphothreonine. Tyrosine 518 carries the post-translational modification Phosphotyrosine.

The protein belongs to the protein kinase superfamily. Ser/Thr protein kinase family. CRK subfamily.

It localises to the membrane. It carries out the reaction L-seryl-[protein] + ATP = O-phospho-L-seryl-[protein] + ADP + H(+). The enzyme catalyses L-threonyl-[protein] + ATP = O-phospho-L-threonyl-[protein] + ADP + H(+). In Arabidopsis thaliana (Mouse-ear cress), this protein is Cysteine-rich receptor-like protein kinase 37 (CRK37).